A 146-amino-acid chain; its full sequence is VQWTAEEKQLITGLWGKVNVADCGAEALARLLIVYPWTQRFFASFGNLSSATAVIGNPMVRAHGKKVLTSFGEAVKNLDSIKSTFAQLSELHCDKLHVDPENFRLLGDILIIVLAAHFSKDFTPEAQQAWAKLVRAVAHALARKYH.

Residues 2 to 146 enclose the Globin domain; sequence QWTAEEKQLI…VAHALARKYH (145 aa). Residues H63 and H92 each coordinate heme b.

This sequence belongs to the globin family. As to quaternary structure, heterotetramer of two alpha chains and two beta chains. As to expression, red blood cells.

In terms of biological role, involved in oxygen transport from the lung to the various peripheral tissues. In Apus apus (Common swift), this protein is Hemoglobin subunit beta (HBB).